The sequence spans 61 residues: Lens epithelial cell protein LEP503 (61 aa).

In terms of tissue distribution, preferentially expressed in the lens epithelial cells.

In Rattus norvegicus (Rat), this protein is Lens epithelial cell protein LEP503 (Lenep).